The chain runs to 204 residues: 3,4-dihydroxy-2-butanone 4-phosphate synthase (204 aa).

Glu-27 is a Mg(2+) binding site. Asp-31 provides a ligand contact to D-ribulose 5-phosphate. At Cys-56 the chain carries S-glutathionyl cysteine. D-ribulose 5-phosphate-binding positions include Thr-82 and 140-144 (RDGHT). His-143 is a Mg(2+) binding site.

The protein belongs to the DHBP synthase family. Homodimer. The cofactor is Mg(2+). Mn(2+) is required as a cofactor. Post-translationally, S-glutathionylation is reversible and dependent on a glutaredoxin.

It carries out the reaction D-ribulose 5-phosphate = (2S)-2-hydroxy-3-oxobutyl phosphate + formate + H(+). It functions in the pathway cofactor biosynthesis; riboflavin biosynthesis; 2-hydroxy-3-oxobutyl phosphate from D-ribulose 5-phosphate: step 1/1. Its function is as follows. Catalyzes the conversion of D-ribulose 5-phosphate to formate and 3,4-dihydroxy-2-butanone 4-phosphate. The chain is 3,4-dihydroxy-2-butanone 4-phosphate synthase from Schizosaccharomyces pombe (strain 972 / ATCC 24843) (Fission yeast).